We begin with the raw amino-acid sequence, 3567 residues long: Zinc finger homeobox protein 4 (3567 aa).

An N-acetylmethionine modification is found at Met-1. Disordered stretches follow at residues 1–54 (METC…LKTD), 425–480 (LSHS…AYSN), 522–545 (TSSS…VRAS), and 565–611 (SKDS…SPGS). Residues 9–28 (ISRQENGQSTSKLCGTTQLD) are compositionally biased toward polar residues. Basic and acidic residues-rich tracts occupy residues 39-54 (EPDR…LKTD) and 434-452 (KMSE…KESN). The span at 468–480 (EPGDEDEEDAYSN) shows a compositional bias: acidic residues. C2H2-type zinc fingers lie at residues 613–636 (IECP…TMMH), 644–667 (LKCP…KEKH), and 699–723 (FRCE…SDKH). A C2H2-type 4; degenerate zinc finger spans residues 767-789 (WRCEVCDYETNVARNLRIHMTSE). 3 C2H2-type zinc fingers span residues 917–941 (YQCK…TDKH), 973–995 (LKCN…TTNH), and 1021–1045 (YYCA…SVKH). The disordered stretch occupies residues 1098–1160 (EQHEEAEGAI…EDVATKRSKP (63 aa)). 2 stretches are compositionally biased toward basic and acidic residues: residues 1120–1132 (TSER…KNSN) and 1148–1160 (AKEE…RSKP). A Glycyl lysine isopeptide (Lys-Gly) (interchain with G-Cter in SUMO2) cross-link involves residue Lys-1149. 2 C2H2-type zinc fingers span residues 1172 to 1195 (YQCP…LSQH) and 1201 to 1224 (ICCP…THLH). Residues 1254–1324 (AASEKSERDT…WNKNSSKDVK (71 aa)) are disordered. The segment covering 1281–1310 (MDDKSMAGLEDSKANVEVKNEEQKPTKEPL) has biased composition (basic and acidic residues). Glycyl lysine isopeptide (Lys-Gly) (interchain with G-Cter in SUMO2) cross-links involve residues Lys-1299 and Lys-1324. 2 consecutive C2H2-type zinc fingers follow at residues 1352 to 1374 (YRCN…SQYH) and 1380 to 1403 (TMCN…EAGH). Residues 1429-1480 (ETMSQDDHGLEQEMEREYEVDHEGKASPVGSDSSSIPDDMGSEPKRTLPFRK) form a disordered region. The segment covering 1433–1453 (QDDHGLEQEMEREYEVDHEGK) has biased composition (basic and acidic residues). The C2H2-type 12 zinc-finger motif lies at 1496-1522 (YKCTVCKESFTQKNILLVHYNSVSHLH). Lys-1546 participates in a covalent cross-link: Glycyl lysine isopeptide (Lys-Gly) (interchain with G-Cter in SUMO2). The C2H2-type 13 zinc-finger motif lies at 1548-1572 (YKCSICNVAYSQSSTLEIHMRSVLH). Low complexity-rich tracts occupy residues 1761-1772 (TQPQLQPQKQQQ) and 1779-1791 (QQQQ…LLKQ). Disordered regions lie at residues 1761–1791 (TQPQ…LLKQ) and 1809–1858 (SYKE…IASG). Lys-1790 participates in a covalent cross-link: Glycyl lysine isopeptide (Lys-Gly) (interchain with G-Cter in SUMO2). Positions 1809-1845 (SYKEAEDISEKPEKPKQEFISEGEGLKEGKDTKKQKS) are enriched in basic and acidic residues. Residues 1901–1924 (LECGTCGKLFSNVLILKSHQEHVH) form a C2H2-type 14 zinc finger. The interval 1948-2024 (YPISPSSPET…PPSAPPQVQL (77 aa)) is disordered. Composition is skewed to pro residues over residues 1955–1974 (PETP…PPQP) and 1991–2019 (QAPP…PSAP). DNA-binding regions (homeobox) lie at residues 2084-2143 (FKRP…RQRN) and 2181-2240 (KRSS…RKSY). Residues 2267 to 2291 (YQCKKCNVVFPRIFDLITHQKKQCY) form a C2H2-type 15; degenerate zinc finger. Disordered regions lie at residues 2289 to 2311 (QCYK…MDAT) and 2328 to 2431 (AKNA…SPLQ). Residues 2293 to 2309 (DEDDDAQDESQTEDSMD) are compositionally biased toward acidic residues. A compositionally biased stretch (low complexity) spans 2331 to 2345 (AAAPAASSGSGTSTP). The span at 2352–2370 (PEPEKTSPKPEYPAEKPKQ) shows a compositional bias: basic and acidic residues. Over residues 2419-2431 (SASQTPVPSSPLQ) the composition is skewed to polar residues. The C2H2-type 16 zinc-finger motif lies at 2448-2470 (YQCDQCTVAFPTLELWQEHQHMH). The span at 2507–2530 (LGSSLTQMPPQASSSHTTAPTTVA) shows a compositional bias: polar residues. The tract at residues 2507–2564 (LGSSLTQMPPQASSSHTTAPTTVAASLKRKLDDKEDNNCSEKEGGNSGEDQHRDKRLR) is disordered. The segment covering 2535-2559 (RKLDDKEDNNCSEKEGGNSGEDQHR) has biased composition (basic and acidic residues). A DNA-binding region (homeobox 3) is located at residues 2560 to 2619 (DKRLRTTITPEQLEILYEKYLLDSNPTRKMLDHIAREVGLKKRVVQVWFQNTRARERKGQ). The C2H2-type 17 zinc finger occupies 2630-2653 (KRCPFCRALFKAKSALESHIRSRH). At Ser-2663 the chain carries Phosphoserine. Polar residues predominate over residues 2764–2785 (AISDATTGDEGNTEMESTTGSS). 2 disordered regions span residues 2764 to 2811 (AISD…TTPT) and 2829 to 2885 (HFND…PGHK). The segment covering 2830-2839 (FNDKDGDHDQ) has biased composition (basic and acidic residues). Residues 2862 to 2874 (PSSPNPFGSSNPF) are compositionally biased toward low complexity. The segment at residues 2884 to 2943 (HKRFRTQMSNLQLKVLKACFSDYRTPTMQECEMLGNEIGLPKRVVQVWFQNARAKEKKFK) is a DNA-binding region (homeobox 4). The C2H2-type 18 zinc finger occupies 2962 to 2986 (PECTLCGVKYSARLSIRDHIFSKQH). Low complexity predominate over residues 3092–3110 (SATSSPALSLSSAPTKPLL). Disordered stretches follow at residues 3092 to 3172 (SATS…KEEK) and 3281 to 3337 (LQKQ…LESK). Over residues 3111 to 3125 (QTPPPPPPPPPPPPS) the composition is skewed to pro residues. Polar residues predominate over residues 3126 to 3135 (SSLSGQQTEQ). Residues 3153-3172 (IKEEELEATKPEKHPKKEEK) show a composition bias toward basic and acidic residues. Lys-3154 participates in a covalent cross-link: Glycyl lysine isopeptide (Lys-Gly) (interchain with G-Cter in SUMO2). A coiled-coil region spans residues 3265 to 3294 (ALLQQYQQYQQNLQESLQKQQKQQQEQQQK). Residues 3281–3293 (LQKQQKQQQEQQQ) show a composition bias toward low complexity. Polar residues predominate over residues 3294 to 3314 (KPVQAKTSKVESDQPQNSNDA). Positions 3315–3337 (SETKEDKSTATESTKEEPQLESK) are enriched in basic and acidic residues. The C2H2-type 19; degenerate zinc-finger motif lies at 3354 to 3378 (FICRKCQMMFTDEDAAVNHQKSFCY). A C2H2-type 20 zinc finger spans residues 3398–3422 (YQCLACDVAISGNEALSQHLQSSLH). Disordered stretches follow at residues 3443–3462 (HSVC…AASS) and 3511–3534 (STSG…ELSQ). Positions 3447–3462 (SPNPNTTSTSQSAASS) are enriched in low complexity.

This sequence belongs to the krueppel C2H2-type zinc-finger protein family. Expressed in brain, skeletal muscle and liver. Very low expression in stomach.

The protein resides in the nucleus. Its function is as follows. May play a role in neural and muscle differentiation. May be involved in transcriptional regulation. The sequence is that of Zinc finger homeobox protein 4 (ZFHX4) from Homo sapiens (Human).